Reading from the N-terminus, the 102-residue chain is Small ribosomal subunit protein uS10 (102 aa).

The protein belongs to the universal ribosomal protein uS10 family. Part of the 30S ribosomal subunit.

Involved in the binding of tRNA to the ribosomes. This is Small ribosomal subunit protein uS10 from Streptococcus mutans serotype c (strain ATCC 700610 / UA159).